The following is a 125-amino-acid chain: Protein Bouncer (125 aa).

The signal sequence occupies residues 1-18; that stretch reads MGCVLLFLLLVCVPVVLP. Disulfide bonds link C23–C48, C26–C35, C42–C66, C72–C91, and C92–C97. The UPAR/Ly6 domain occupies 23-98; sequence CLFCPVTSLN…FSCCGGHYCN (76 aa). Residue N32 is glycosylated (N-linked (GlcNAc...) asparagine). N-linked (GlcNAc...) asparagine glycosylation is present at N84. Residue N98 is the site of GPI-anchor amidated asparagine attachment. A propeptide spans 99 to 125 (removed in mature form); the sequence is SQPRAEPGGRLLLLLLPAAALTAAGAL.

The protein belongs to the SPACA4/bouncer family. Interacts with spermatocyte complex composed of izumo1, spaca6 and tmem81. Post-translationally, N-glycosylated. As to expression, highly expressed in oocytes. Not expressed in testis.

Its subcellular location is the cell membrane. Oocyte-expressed fertilization factor that mediates sperm-egg binding and is essential for sperm entry into the egg. Necessary and sufficient to mediate species-specific gamete recognition and fertilization, which is essential for vertebrate species performing external fertilization. External fertilization cannot guarantee that only conspecific sperm reaches the egg by precopulatory mate choice: proteins such as Bouncer can therefore support the selection of conspecific sperm. This chain is Protein Bouncer, found in Danio rerio (Zebrafish).